We begin with the raw amino-acid sequence, 297 residues long: Phosphatidylserine decarboxylase proenzyme (297 aa).

Residues D92, H149, and S254 each act as charge relay system; for autoendoproteolytic cleavage activity in the active site. The active-site Schiff-base intermediate with substrate; via pyruvic acid; for decarboxylase activity is the S254. At S254 the chain carries Pyruvic acid (Ser); by autocatalysis.

This sequence belongs to the phosphatidylserine decarboxylase family. PSD-B subfamily. Prokaryotic type I sub-subfamily. Heterodimer of a large membrane-associated beta subunit and a small pyruvoyl-containing alpha subunit. Pyruvate serves as cofactor. Post-translationally, is synthesized initially as an inactive proenzyme. Formation of the active enzyme involves a self-maturation process in which the active site pyruvoyl group is generated from an internal serine residue via an autocatalytic post-translational modification. Two non-identical subunits are generated from the proenzyme in this reaction, and the pyruvate is formed at the N-terminus of the alpha chain, which is derived from the carboxyl end of the proenzyme. The autoendoproteolytic cleavage occurs by a canonical serine protease mechanism, in which the side chain hydroxyl group of the serine supplies its oxygen atom to form the C-terminus of the beta chain, while the remainder of the serine residue undergoes an oxidative deamination to produce ammonia and the pyruvoyl prosthetic group on the alpha chain. During this reaction, the Ser that is part of the protease active site of the proenzyme becomes the pyruvoyl prosthetic group, which constitutes an essential element of the active site of the mature decarboxylase.

Its subcellular location is the cell membrane. It carries out the reaction a 1,2-diacyl-sn-glycero-3-phospho-L-serine + H(+) = a 1,2-diacyl-sn-glycero-3-phosphoethanolamine + CO2. Its pathway is phospholipid metabolism; phosphatidylethanolamine biosynthesis; phosphatidylethanolamine from CDP-diacylglycerol: step 2/2. Catalyzes the formation of phosphatidylethanolamine (PtdEtn) from phosphatidylserine (PtdSer). The sequence is that of Phosphatidylserine decarboxylase proenzyme from Bordetella bronchiseptica (strain ATCC BAA-588 / NCTC 13252 / RB50) (Alcaligenes bronchisepticus).